The chain runs to 214 residues: ATP phosphoribosyltransferase (214 aa).

It belongs to the ATP phosphoribosyltransferase family. Short subfamily. As to quaternary structure, heteromultimer composed of HisG and HisZ subunits.

Its subcellular location is the cytoplasm. The catalysed reaction is 1-(5-phospho-beta-D-ribosyl)-ATP + diphosphate = 5-phospho-alpha-D-ribose 1-diphosphate + ATP. The protein operates within amino-acid biosynthesis; L-histidine biosynthesis; L-histidine from 5-phospho-alpha-D-ribose 1-diphosphate: step 1/9. In terms of biological role, catalyzes the condensation of ATP and 5-phosphoribose 1-diphosphate to form N'-(5'-phosphoribosyl)-ATP (PR-ATP). Has a crucial role in the pathway because the rate of histidine biosynthesis seems to be controlled primarily by regulation of HisG enzymatic activity. This Streptococcus gordonii (strain Challis / ATCC 35105 / BCRC 15272 / CH1 / DL1 / V288) protein is ATP phosphoribosyltransferase.